Here is a 219-residue protein sequence, read N- to C-terminus: Biofilm-associated metzincin protease inhibitor (219 aa).

Residues 4–24 form a helical membrane-spanning segment; sequence TWIYAASAAAIGGALIGGWLL. Basic and acidic residues predominate over residues 191-204; sequence DIAARSDPHGDHVD. Residues 191 to 219 are disordered; sequence DIAARSDPHGDHVDAPLAELPPMPPPAQG. A compositionally biased stretch (pro residues) spans 209–219; that stretch reads ELPPMPPPAQG.

The protein resides in the cell membrane. Its function is as follows. Inhibitor of the metalloendopeptidase Mep72. Forms a protein-protein complex with the protease, which is the product of its coregulated adjacent gene, and probably prevents premature protease activity until the protein has been secreted. The protein is Biofilm-associated metzincin protease inhibitor of Pseudomonas aeruginosa (strain ATCC 15692 / DSM 22644 / CIP 104116 / JCM 14847 / LMG 12228 / 1C / PRS 101 / PAO1).